Reading from the N-terminus, the 213-residue chain is Nicotinate-nucleotide adenylyltransferase (213 aa).

This sequence belongs to the NadD family.

It carries out the reaction nicotinate beta-D-ribonucleotide + ATP + H(+) = deamido-NAD(+) + diphosphate. The protein operates within cofactor biosynthesis; NAD(+) biosynthesis; deamido-NAD(+) from nicotinate D-ribonucleotide: step 1/1. Its function is as follows. Catalyzes the reversible adenylation of nicotinate mononucleotide (NaMN) to nicotinic acid adenine dinucleotide (NaAD). The polypeptide is Nicotinate-nucleotide adenylyltransferase (Salmonella typhi).